Here is a 312-residue protein sequence, read N- to C-terminus: Bark storage protein A (312 aa).

A signal peptide spans 1-24 (MPQQSMQASLIDPIAEIERSNCKI). N70 carries N-linked (GlcNAc...) asparagine glycosylation.

To wound-inducible poplar endochitinases. In terms of assembly, monomer. Bark.

Functionally, may play a role in nitrogen storage. In Populus deltoides (Eastern poplar), this protein is Bark storage protein A (BSPA).